Here is a 369-residue protein sequence, read N- to C-terminus: Signal recognition particle receptor FtsY (369 aa).

Residues 20 to 42 (GEENKKEPETRQTDQLESKKEET) show a composition bias toward basic and acidic residues. The interval 20–58 (GEENKKEPETRQTDQLESKKEETIQQQQNVQQPQAENKI) is disordered. A compositionally biased stretch (low complexity) spans 44–53 (QQQQNVQQPQ). GTP contacts are provided by residues 180-187 (GVNGVGKT), 262-266 (DTAGR), and 320-323 (TKVD).

The protein belongs to the GTP-binding SRP family. FtsY subfamily. As to quaternary structure, part of the signal recognition particle protein translocation system, which is composed of SRP and FtsY.

The protein resides in the cell membrane. It localises to the cytoplasm. The catalysed reaction is GTP + H2O = GDP + phosphate + H(+). Its function is as follows. Involved in targeting and insertion of nascent membrane proteins into the cytoplasmic membrane. Acts as a receptor for the complex formed by the signal recognition particle (SRP) and the ribosome-nascent chain (RNC). The polypeptide is Signal recognition particle receptor FtsY (Sulfolobus acidocaldarius (strain ATCC 33909 / DSM 639 / JCM 8929 / NBRC 15157 / NCIMB 11770)).